Here is a 450-residue protein sequence, read N- to C-terminus: 23S rRNA (uracil(1939)-C(5))-methyltransferase RlmD (450 aa).

Positions 12–70 (SKQLSAKLSLNVDQLDHLGAGIAQYQGKVVFIPGALPDETVTVQLTEQKKNYARAKLIK) constitute a TRAM domain. The [4Fe-4S] cluster site is built by cysteine 83, cysteine 89, cysteine 92, and cysteine 171. Positions 283, 312, 317, 333, 360, and 380 each coordinate S-adenosyl-L-methionine. Residue cysteine 406 is the Nucleophile of the active site.

It belongs to the class I-like SAM-binding methyltransferase superfamily. RNA M5U methyltransferase family. RlmD subfamily.

It carries out the reaction uridine(1939) in 23S rRNA + S-adenosyl-L-methionine = 5-methyluridine(1939) in 23S rRNA + S-adenosyl-L-homocysteine + H(+). In terms of biological role, catalyzes the formation of 5-methyl-uridine at position 1939 (m5U1939) in 23S rRNA. This is 23S rRNA (uracil(1939)-C(5))-methyltransferase RlmD from Shewanella sp. (strain W3-18-1).